Reading from the N-terminus, the 248-residue chain is UDP-2,3-diacylglucosamine hydrolase (248 aa).

Residues aspartate 7, histidine 9, aspartate 40, asparagine 78, and histidine 113 each coordinate Mn(2+). 78–79 serves as a coordination point for substrate; it reads NR. 5 residues coordinate substrate: aspartate 121, serine 159, threonine 163, lysine 166, and histidine 194. Residues histidine 194 and histidine 196 each contribute to the Mn(2+) site.

It belongs to the LpxH family. Requires Mn(2+) as cofactor.

The protein localises to the cell inner membrane. The enzyme catalyses UDP-2-N,3-O-bis[(3R)-3-hydroxytetradecanoyl]-alpha-D-glucosamine + H2O = 2-N,3-O-bis[(3R)-3-hydroxytetradecanoyl]-alpha-D-glucosaminyl 1-phosphate + UMP + 2 H(+). Its pathway is glycolipid biosynthesis; lipid IV(A) biosynthesis; lipid IV(A) from (3R)-3-hydroxytetradecanoyl-[acyl-carrier-protein] and UDP-N-acetyl-alpha-D-glucosamine: step 4/6. In terms of biological role, hydrolyzes the pyrophosphate bond of UDP-2,3-diacylglucosamine to yield 2,3-diacylglucosamine 1-phosphate (lipid X) and UMP by catalyzing the attack of water at the alpha-P atom. Involved in the biosynthesis of lipid A, a phosphorylated glycolipid that anchors the lipopolysaccharide to the outer membrane of the cell. This Pseudomonas savastanoi pv. phaseolicola (strain 1448A / Race 6) (Pseudomonas syringae pv. phaseolicola (strain 1448A / Race 6)) protein is UDP-2,3-diacylglucosamine hydrolase.